A 305-amino-acid polypeptide reads, in one-letter code: Nucleotide-binding protein Rxyl_2009 (305 aa).

24–31 (GLSGAGKS) lines the ATP pocket. 75-78 (DIRG) contributes to the GTP binding site.

It belongs to the RapZ-like family.

Its function is as follows. Displays ATPase and GTPase activities. The chain is Nucleotide-binding protein Rxyl_2009 from Rubrobacter xylanophilus (strain DSM 9941 / JCM 11954 / NBRC 16129 / PRD-1).